The chain runs to 209 residues: Probable GTP-binding protein EngB (209 aa).

The region spanning 12–203 is the EngB-type G domain; the sequence is INLEIIFAGR…RDRLHEMKRD (192 aa). Residues 20–27, 45–49, 62–65, 142–145, and 179–181 each bind GTP; these read GRSNVGKS, GVTLR, DMPG, NKMD, and ISA. The Mg(2+) site is built by Ser27 and Thr47.

Belongs to the TRAFAC class TrmE-Era-EngA-EngB-Septin-like GTPase superfamily. EngB GTPase family. It depends on Mg(2+) as a cofactor.

Its function is as follows. Necessary for normal cell division and for the maintenance of normal septation. This Methanosarcina mazei (strain ATCC BAA-159 / DSM 3647 / Goe1 / Go1 / JCM 11833 / OCM 88) (Methanosarcina frisia) protein is Probable GTP-binding protein EngB.